The chain runs to 354 residues: NADH-ubiquinone oxidoreductase chain 2 (354 aa).

Transmembrane regions (helical) follow at residues 5–25 (ILMV…SSHH), 26–46 (WFTL…ILSY), 60–80 (FLVQ…QAWL), 96–116 (FLMT…YWFP), 122–142 (VGFI…FAVL), 149–169 (LNIS…GWGG), 198–218 (VSVA…VFFM), 242–262 (AGLV…GFLI), 274–294 (GCFI…FFYL), and 330–350 (VLLS…PVFI).

The protein belongs to the complex I subunit 2 family.

It localises to the mitochondrion inner membrane. It carries out the reaction a ubiquinone + NADH + 5 H(+)(in) = a ubiquinol + NAD(+) + 4 H(+)(out). Its function is as follows. Core subunit of the mitochondrial membrane respiratory chain NADH dehydrogenase (Complex I) that is believed to belong to the minimal assembly required for catalysis. Complex I functions in the transfer of electrons from NADH to the respiratory chain. The immediate electron acceptor for the enzyme is believed to be ubiquinone. This chain is NADH-ubiquinone oxidoreductase chain 2 (ND2), found in Patiria pectinifera (Starfish).